Reading from the N-terminus, the 180-residue chain is ATP synthase subunit delta (180 aa).

Belongs to the ATPase delta chain family. In terms of assembly, F-type ATPases have 2 components, F(1) - the catalytic core - and F(0) - the membrane proton channel. F(1) has five subunits: alpha(3), beta(3), gamma(1), delta(1), epsilon(1). F(0) has three main subunits: a(1), b(2) and c(10-14). The alpha and beta chains form an alternating ring which encloses part of the gamma chain. F(1) is attached to F(0) by a central stalk formed by the gamma and epsilon chains, while a peripheral stalk is formed by the delta and b chains.

Its subcellular location is the cell inner membrane. In terms of biological role, f(1)F(0) ATP synthase produces ATP from ADP in the presence of a proton or sodium gradient. F-type ATPases consist of two structural domains, F(1) containing the extramembraneous catalytic core and F(0) containing the membrane proton channel, linked together by a central stalk and a peripheral stalk. During catalysis, ATP synthesis in the catalytic domain of F(1) is coupled via a rotary mechanism of the central stalk subunits to proton translocation. Its function is as follows. This protein is part of the stalk that links CF(0) to CF(1). It either transmits conformational changes from CF(0) to CF(1) or is implicated in proton conduction. This Legionella pneumophila subsp. pneumophila (strain Philadelphia 1 / ATCC 33152 / DSM 7513) protein is ATP synthase subunit delta.